The following is a 551-amino-acid chain: Palmdelphin (551 aa).

Residue methionine 1 is modified to N-acetylmethionine. The stretch at 12-106 (QAITDKRKIQ…LQISANEEAI (95 aa)) forms a coiled coil. Lysine 125 participates in a covalent cross-link: Glycyl lysine isopeptide (Lys-Gly) (interchain with G-Cter in SUMO2). Serine 135 carries the post-translational modification Phosphoserine. Lysine 178 participates in a covalent cross-link: Glycyl lysine isopeptide (Lys-Gly) (interchain with G-Cter in SUMO1); alternate. Lysine 178 is covalently cross-linked (Glycyl lysine isopeptide (Lys-Gly) (interchain with G-Cter in SUMO2); alternate). Basic and acidic residues predominate over residues 247–258 (ERNSKSPTEYHE). The segment at 247–266 (ERNSKSPTEYHEPVYANPFC) is disordered. Threonine 270 is subject to Phosphothreonine. Disordered stretches follow at residues 294-390 (LGNH…TCQE) and 451-533 (AEDN…GTED). A phosphoserine mark is found at serine 321 and serine 349. A compositionally biased stretch (polar residues) spans 341–353 (HTQQKRMASPWEE). Basic and acidic residues predominate over residues 354 to 365 (SSNRQNEHEVSP). Residues serine 370, serine 375, serine 384, serine 385, serine 498, serine 515, and serine 520 each carry the phosphoserine modification.

Belongs to the paralemmin family. As to quaternary structure, interacts with GLUL. In terms of processing, phosphorylated. In terms of tissue distribution, ubiquitous. Expressed at highest levels in the heart and lung.

The protein localises to the cytoplasm. It is found in the cell projection. Its subcellular location is the dendrite. The protein resides in the dendritic spine. The protein is Palmdelphin (Palmd) of Mus musculus (Mouse).